The chain runs to 239 residues: Ribosomal RNA small subunit methyltransferase G (239 aa).

Residues Gly78, Phe83, 129-130 (AE), and Arg148 contribute to the S-adenosyl-L-methionine site.

It belongs to the methyltransferase superfamily. RNA methyltransferase RsmG family.

Its subcellular location is the cytoplasm. Specifically methylates the N7 position of a guanine in 16S rRNA. This Desulfitobacterium hafniense (strain Y51) protein is Ribosomal RNA small subunit methyltransferase G.